The primary structure comprises 212 residues: Large ribosomal subunit protein uL3 (212 aa).

Gln153 bears the N5-methylglutamine mark.

The protein belongs to the universal ribosomal protein uL3 family. Part of the 50S ribosomal subunit. Forms a cluster with proteins L14 and L19. In terms of processing, methylated by PrmB.

One of the primary rRNA binding proteins, it binds directly near the 3'-end of the 23S rRNA, where it nucleates assembly of the 50S subunit. The polypeptide is Large ribosomal subunit protein uL3 (Shewanella frigidimarina (strain NCIMB 400)).